A 138-amino-acid chain; its full sequence is Basic phospholipase A2 homolog Vur-S49 (138 aa).

The first 16 residues, 1 to 16, serve as a signal peptide directing secretion; sequence MRALWIVAVCLIGVEG. Cystine bridges form between Cys42-Cys131, Cys44-Cys60, Cys59-Cys111, Cys65-Cys138, Cys66-Cys104, Cys73-Cys97, and Cys91-Cys102. The tract at residues 121-133 is important for membrane-damaging activities in eukaryotes and bacteria; heparin-binding; the sequence is KKYKVYLRFKCKG.

It belongs to the phospholipase A2 family. Group II subfamily. S49 sub-subfamily. Expressed by the venom gland.

Its subcellular location is the secreted. Its function is as follows. Snake venom phospholipase A2 homolog that lacks enzymatic activity. Is able to suppress the acetylcholine (ACh)-evoked current mediated by alpha-7 (CHRNA7)-similar nAChRs in L.stagnalis neurons (IC(50)=2.18 uM). This activity is only partially reversible and seems to be non-competitive. This chain is Basic phospholipase A2 homolog Vur-S49, found in Vipera renardi (Steppe viper).